A 476-amino-acid polypeptide reads, in one-letter code: Cytochrome c oxidase subunit 1 (476 aa).

The chain crosses the membrane as a helical span at residues leucine 19–leucine 39. Glutamate 42 contributes to the Ca(2+) binding site. A run of 8 helical transmembrane segments spans residues methionine 61–glycine 81, isoleucine 105–phenylalanine 125, leucine 144–isoleucine 164, isoleucine 194–methionine 214, leucine 240–isoleucine 260, methionine 278–tyrosine 298, phenylalanine 309–leucine 329, and leucine 345–glycine 365. Position 66 (histidine 66) interacts with Fe(II)-heme a. Histidine 246 provides a ligand contact to Cu cation. Residues histidine 246 to tyrosine 250 constitute a cross-link (1'-histidyl-3'-tyrosine (His-Tyr)). Position 250 (tyrosine 250) interacts with O2. Residues histidine 295 and histidine 296 each contribute to the Cu cation site. Positions 374 and 375 each coordinate Mg(2+). Transmembrane regions (helical) follow at residues valine 379–valine 399 and threonine 415–methionine 435. Histidine 382 lines the heme a3 pocket. Histidine 384 serves as a coordination point for Fe(II)-heme a. Proline 448 contributes to the Ca(2+) binding site. A helical transmembrane segment spans residues asparagine 455–phenylalanine 475.

It belongs to the heme-copper respiratory oxidase family. Component of the cytochrome c oxidase (complex IV, CIV), a multisubunit enzyme composed of a catalytic core of 3 subunits and several supernumerary subunits. The complex exists as a monomer or a dimer and forms supercomplexes (SCs) in the inner mitochondrial membrane with ubiquinol-cytochrome c oxidoreductase (cytochrome b-c1 complex, complex III, CIII). Heme is required as a cofactor. It depends on Cu cation as a cofactor.

It localises to the mitochondrion inner membrane. The catalysed reaction is 4 Fe(II)-[cytochrome c] + O2 + 8 H(+)(in) = 4 Fe(III)-[cytochrome c] + 2 H2O + 4 H(+)(out). The protein operates within energy metabolism; oxidative phosphorylation. In terms of biological role, component of the cytochrome c oxidase, the last enzyme in the mitochondrial electron transport chain which drives oxidative phosphorylation. The respiratory chain contains 3 multisubunit complexes succinate dehydrogenase (complex II, CII), ubiquinol-cytochrome c oxidoreductase (cytochrome b-c1 complex, complex III, CIII) and cytochrome c oxidase (complex IV, CIV), that cooperate to transfer electrons derived from NADH and succinate to molecular oxygen, creating an electrochemical gradient over the inner membrane that drives transmembrane transport and the ATP synthase. Cytochrome c oxidase is the component of the respiratory chain that catalyzes the reduction of oxygen to water. Electrons originating from reduced cytochrome c in the intermembrane space (IMS) are transferred via the dinuclear copper A center (CU(A)) of subunit 2 and heme A of subunit 1 to the active site in subunit 1, a binuclear center (BNC) formed by heme A3 and copper B (CU(B)). The BNC reduces molecular oxygen to 2 water molecules using 4 electrons from cytochrome c in the IMS and 4 protons from the mitochondrial matrix. The sequence is that of Cytochrome c oxidase subunit 1 (COI) from Plasmodium berghei.